Consider the following 490-residue polypeptide: Homoserine O-acetyltransferase (490 aa).

Positions 47–353 (NAILVCHALT…SQFGHDAFLI (307 aa)) constitute an AB hydrolase-1 domain. The Nucleophile role is filled by serine 152. Arginine 221 is a binding site for substrate. Catalysis depends on residues aspartate 315 and histidine 348. Aspartate 349 lines the substrate pocket. CBS domains follow at residues 375–432 (MNTQ…YTSL) and 436–490 (MSSQ…GRGP).

Belongs to the AB hydrolase superfamily. MetX family. Homodimer.

It localises to the cytoplasm. The enzyme catalyses L-homoserine + acetyl-CoA = O-acetyl-L-homoserine + CoA. The protein operates within amino-acid biosynthesis; L-methionine biosynthesis via de novo pathway; O-acetyl-L-homoserine from L-homoserine: step 1/1. Transfers an acetyl group from acetyl-CoA to L-homoserine, forming acetyl-L-homoserine. This is Homoserine O-acetyltransferase from Methanosphaerula palustris (strain ATCC BAA-1556 / DSM 19958 / E1-9c).